A 215-amino-acid polypeptide reads, in one-letter code: Small ribosomal subunit protein uS5 (215 aa).

A compositionally biased stretch (polar residues) spans 1 to 11; it reads MTDSSPQSNPN. A disordered region spans residues 1-61; that stretch reads MTDSSPQSNP…GQDRDSEWQE (61 aa). The span at 12 to 28 shows a compositional bias: low complexity; it reads AVPGAADVPAAAQGQQQ. Basic and acidic residues predominate over residues 39 to 61; it reads RGDRRGDRRGGRRGQDRDSEWQE. One can recognise an S5 DRBM domain in the interval 59 to 122; the sequence is WQERVVQIRR…ADGKKHLVKV (64 aa).

Belongs to the universal ribosomal protein uS5 family. In terms of assembly, part of the 30S ribosomal subunit. Contacts proteins S4 and S8.

With S4 and S12 plays an important role in translational accuracy. Functionally, located at the back of the 30S subunit body where it stabilizes the conformation of the head with respect to the body. This Synechococcus sp. (strain CC9902) protein is Small ribosomal subunit protein uS5.